The following is a 431-amino-acid chain: Septin-11 (431 aa).

Alanine 2 is subject to N-acetylalanine. Serine 9 carries the post-translational modification Phosphoserine. Positions 38–304 (QGFCFNILCV…ELYRRCKLEE (267 aa)) constitute a Septin-type G domain. The segment at 48-55 (GETGIGKS) is G1 motif. Residues 48 to 55 (GETGIGKS), glycine 103, 184 to 192 (KADTIAKNE), glycine 238, and arginine 253 each bind GTP. The tract at residues 100 to 103 (DTVG) is G3 motif. Positions 183 to 186 (AKAD) are G4 motif. Residues 320–413 (QETYEAKRNE…LLQSQAQQSG (94 aa)) adopt a coiled-coil conformation. Positions 400–431 (AAAQLLQSQAQQSGAQQTKKDKDKKNPWLCTE) are disordered. The span at 401–416 (AAQLLQSQAQQSGAQQ) shows a compositional bias: low complexity.

The protein belongs to the TRAFAC class TrmE-Era-EngA-EngB-Septin-like GTPase superfamily. Septin GTPase family. As to quaternary structure, septins polymerize into heterooligomeric protein complexes that form filaments, and can associate with cellular membranes, actin filaments and microtubules. Forms homooligomers. GTPase activity is required for filament formation. Interacts with SEPTIN7, SEPTIN9 and SEPTIN12. Expressed in the cerebral cortex (at protein level).

It localises to the cytoplasm. Its subcellular location is the cytoskeleton. The protein resides in the synapse. It is found in the cell projection. The protein localises to the dendritic spine. It localises to the axon. Filament-forming cytoskeletal GTPase. May play a role in cytokinesis (Potential). May play a role in the cytoarchitecture of neurons, including dendritic arborization and dendritic spines, and in GABAergic synaptic connectivity. The chain is Septin-11 from Mus musculus (Mouse).